Reading from the N-terminus, the 154-residue chain is Nuclear cap-binding protein subunit 2 (154 aa).

Residues tyrosine 10, tyrosine 33, 102 to 106, 113 to 117, and 123 to 124 contribute to the mRNA site; these read RVDWD, RQYGR, and QV. Positions 30–108 constitute an RRM domain; that stretch reads CTLYVGNLSF…RLIRVDWDAG (79 aa).

The protein belongs to the RRM NCBP2 family. In terms of assembly, component of the nuclear cap-binding complex (CBC), a heterodimer composed of Cbp80 and Cbp20 that interacts with m7GpppG-capped RNA. Interacts with Ars2.

It localises to the nucleus. Component of the cap-binding complex (CBC), which binds co-transcriptionally to the 5' cap of pre-mRNAs and is involved in various processes such as pre-mRNA splicing and RNA-mediated gene silencing (RNAi). The CBC complex is involved in miRNA-mediated RNA interference via its interaction with Ars2 and is required for primary microRNAs (miRNAs) processing. Also involved in innate immunity via the short interfering RNAs (siRNAs) processing machinery by restricting the viral RNA production. In the CBC complex, Cbp20 recognizes and binds capped RNAs (m7GpppG-capped RNA) but requires Cbp80 to stabilize the movement of its N-terminal loop and lock the CBC into a high affinity cap-binding state with the cap structure. This Drosophila melanogaster (Fruit fly) protein is Nuclear cap-binding protein subunit 2 (Cbp20).